Consider the following 62-residue polypeptide: Conorfamide-Tx1 (62 aa).

The first 19 residues, 1–19, serve as a signal peptide directing secretion; that stretch reads MSGRGFLLLALLLLVTVEA. The propeptide occupies 20–26; sequence TKVEKNK. At Tyr46 the chain carries Tyrosine amide. Residues 47-62 constitute a propeptide that is removed on maturation; that stretch reads GRRDMQSPLLSERLRF.

This sequence belongs to the FARP (FMRFamide related peptide) family. As to expression, expressed by the venom duct.

Its subcellular location is the secreted. This peptide does not show activity on human and mouse sensory neuron-specific G-protein coupled receptors MRGPRX1. In Conus textile (Cloth-of-gold cone), this protein is Conorfamide-Tx1.